The primary structure comprises 373 residues: Polygalacturonase (373 aa).

Residues 1–24 (MVRNIVSRLCSQLFALPSSSLQER) form the signal peptide. A disulfide bridge connects residues Cys-27 and Cys-42. N-linked (GlcNAc...) asparagine glycosylation is found at Asn-65 and Asn-94. 8 PbH1 repeats span residues 136 to 158 (TGNS…DITG), 159 to 197 (SSQL…DISS), 198 to 219 (SDHV…AVTS), 220 to 240 (GTNI…SIGS), 249 to 270 (VDGV…RIKS), 278 to 300 (INNV…DVQQ), 312 to 333 (TNGV…ASSA), and 345 to 369 (CSGF…YPTN). Asp-212 (proton donor) is an active-site residue. Cys-214 and Cys-230 are disulfide-bonded. Residue His-234 is part of the active site. Residues Asn-280 and Asn-290 are each glycosylated (N-linked (GlcNAc...) asparagine). 2 disulfide bridges follow: Cys-340–Cys-345 and Cys-364–Cys-371.

This sequence belongs to the glycosyl hydrolase 28 family.

It is found in the secreted. The catalysed reaction is (1,4-alpha-D-galacturonosyl)n+m + H2O = (1,4-alpha-D-galacturonosyl)n + (1,4-alpha-D-galacturonosyl)m.. In terms of biological role, involved in maceration and soft-rotting of plant tissue. Hydrolyzes the 1,4-alpha glycosidic bonds of de-esterified pectate in the smooth region of the plant cell wall. The polypeptide is Polygalacturonase (PGA) (Fusarium fujikuroi (Bakanae and foot rot disease fungus)).